The following is a 358-amino-acid chain: Neutral protease 2 homolog MEP8 (358 aa).

The N-terminal stretch at Met-1–Ser-19 is a signal peptide. Positions Tyr-20–Arg-179 are excised as a propeptide. 2 disulfides stabilise this stretch: Cys-186–Cys-256 and Cys-263–Cys-281. His-305 provides a ligand contact to Zn(2+). Residue Glu-306 is part of the active site. Residues His-309 and Asp-320 each coordinate Zn(2+).

Belongs to the peptidase M35 family. The cofactor is Zn(2+).

The protein resides in the secreted. It carries out the reaction Preferential cleavage of bonds with hydrophobic residues in P1'. Also 3-Asn-|-Gln-4 and 8-Gly-|-Ser-9 bonds in insulin B chain.. Secreted metalloproteinase that allows assimilation of proteinaceous substrates. Shows high activities on basic nuclear substrates such as histone and protamine. May be involved in virulence. In Coccidioides posadasii (strain C735) (Valley fever fungus), this protein is Neutral protease 2 homolog MEP8 (MEP8).